The following is a 325-amino-acid chain: UDP-N-acetylglucosamine transporter (325 aa).

Helical transmembrane passes span 8–24 (VSLG…VLTM), 42–58 (AVVV…ILLV), 138–154 (VYQW…VAFV), 173–189 (FVGL…SGFA), 209–225 (IQLG…GVYI), 246–262 (IVVV…AAVI), 268–284 (ILKG…STLI), and 295–311 (TSVF…ATFL).

This sequence belongs to the nucleotide-sugar transporter family. SLC35A subfamily. As to quaternary structure, interacts with SLC35A2; the interaction is reduced in the presence of SLC35A4. Found in a complex with SLC35A2 and SLC35A4. Interacts with MGAT4B. Post-translationally, O-Glcnacylation regulates the stability of SLC35A3 and the specific complex formation with MGAT4B.

It localises to the golgi apparatus membrane. The catalysed reaction is UMP(out) + UDP-N-acetyl-alpha-D-glucosamine(in) = UMP(in) + UDP-N-acetyl-alpha-D-glucosamine(out). Transports diphosphate-N-acetylglucosamine (UDP-GlcNAc) from the cytosol into the lumen of the Golgi apparatus, functioning as an antiporter that exchanges UDP-N-acetyl-alpha-D-glucosamine for UMP. May supply UDP-GlcNAc as substrate for Golgi-resident glycosyltransferases that generate highly branched, multiantennary complex N-glycans and keratan sulfate. However, the exact role of SLC35A3 still needs to be elucidated, it could be a member of a catalytically more efficient multiprotein complex rather than function independently as a single transporter. The polypeptide is UDP-N-acetylglucosamine transporter (SLC35A3) (Homo sapiens (Human)).